The chain runs to 176 residues: ATP-dependent protease subunit HslV (176 aa).

Thr2 is an active-site residue. 3 residues coordinate Na(+): Gly157, Cys160, and Thr163.

This sequence belongs to the peptidase T1B family. HslV subfamily. As to quaternary structure, a double ring-shaped homohexamer of HslV is capped on each side by a ring-shaped HslU homohexamer. The assembly of the HslU/HslV complex is dependent on binding of ATP.

The protein resides in the cytoplasm. The catalysed reaction is ATP-dependent cleavage of peptide bonds with broad specificity.. Allosterically activated by HslU binding. Functionally, protease subunit of a proteasome-like degradation complex believed to be a general protein degrading machinery. This Salmonella agona (strain SL483) protein is ATP-dependent protease subunit HslV.